A 101-amino-acid polypeptide reads, in one-letter code: Albumin (101 aa).

2 Albumin domains span residues 1–80 (DAEH…AFXY) and 81–101 (ESGA…PDVL). Residue histidine 4 participates in Cu cation binding.

The protein belongs to the ALB/AFP/VDB family. As to expression, plasma.

The protein resides in the secreted. Functionally, binds water, Ca(2+), Na(+), K(+), fatty acids, hormones, bilirubin and drugs. Its main function is the regulation of the colloidal osmotic pressure of blood. This Neoceratodus forsteri (Australian lungfish) protein is Albumin (alb).